The sequence spans 667 residues: WD repeat-containing protein 48 homolog (667 aa).

WD repeat units lie at residues 26–65, 71–110, 113–152, 164–203, 206–245, 248–287, 290–329, and 349–388; these read QHRNGVNALQLDSNNGKLYSAGRDAIIRVWNTRTESNDKY, HHNDWVNDIVLCCNGRNLISASCDTTVKVWNAHKGFCMST, THRDYVQALAYAKDREQVASAGLDKAIFLWDVNTLTALTA, GSKDSIYSLAMNPSGTVIVSGSTENILRIWDPRTCMRSMK, GHTENVRCLVVSPDGNQVVSGSSDGTIKVWNLGQQRCIQT, VHKEGVWSLLMSENFQYIISGSRDRNIIVTEMRNPSNKML, EEKAPVLSLGYNIDKTGVWATTWNSDIRCWKLPMYDRCTL, and KGGAAIKECTVLNDKRYIITKDSQDQVVVYDVLRVIKKEE. Positions 591-615 are disordered; the sequence is ETTPSGGNANNSLQNSQSDANSEGS.

The protein belongs to the WD repeat WDR48 family. In terms of assembly, catalytic component of the Usp12-46 deubiquitylase complex consisting of Usp12-46, Wdr20 and Uaf1; regulatory subunit that, together wtih Wdr20, stabilizes Usp12-46. The Usp12-46 deubiquitylase complex associates with arr/arrow; the interaction leads to deubiquitination and stabilization of arr/arrow.

Its function is as follows. Regulatory component of the Usp12-46 deubiquitylase complex. activates deubiquitination by increasing the catalytic turnover without increasing the affinity of deubiquitinating enzymes for the substrate. The complex deubiquitylates the wg/wingless-signaling receptor arr/arrow, which stabilizes the receptor and increases its concentration at the cell surface; this enhances the sensitivity of cells to wg/wingless-signal stimulation. This increases the amplitude and spatial range of the signaling response to the wg/wingless morphogen gradient, facilitating the precise concentration-dependent regulation of its target genes. Together with Wdr20 and Usp12-46 required for wg/wingless-mediated signaling in the wing imaginal disc and for wg/wingless-dependent regulation of intestinal stem cell proliferation. This is WD repeat-containing protein 48 homolog from Drosophila virilis (Fruit fly).